The primary structure comprises 176 residues: Oligoribonuclease (176 aa).

The region spanning 2-159 is the Exonuclease domain; that stretch reads EMTGLNPETD…DDILESIEEM (158 aa). The active site involves Y117.

The protein belongs to the oligoribonuclease family.

The protein localises to the cytoplasm. Its function is as follows. 3'-to-5' exoribonuclease specific for small oligoribonucleotides. The polypeptide is Oligoribonuclease (Neisseria gonorrhoeae (strain ATCC 700825 / FA 1090)).